The chain runs to 472 residues: 23S rRNA (uracil(1939)-C(5))-methyltransferase RlmD (472 aa).

A compositionally biased stretch (basic residues) spans 1-15 (MSRTAPHRRAPKRYK). Positions 1-23 (MSRTAPHRRAPKRYKTPPPAPAH) are disordered. One can recognise a TRAM domain in the interval 23–87 (HVVTGNEPVI…PKFEQAEVVQ (65 aa)). C100, C106, C109, and C188 together coordinate [4Fe-4S] cluster. 6 residues coordinate S-adenosyl-L-methionine: Q296, F325, N330, E346, N374, and D395. The Nucleophile role is filled by C428.

The protein belongs to the class I-like SAM-binding methyltransferase superfamily. RNA M5U methyltransferase family. RlmD subfamily.

The catalysed reaction is uridine(1939) in 23S rRNA + S-adenosyl-L-methionine = 5-methyluridine(1939) in 23S rRNA + S-adenosyl-L-homocysteine + H(+). Catalyzes the formation of 5-methyl-uridine at position 1939 (m5U1939) in 23S rRNA. This Paraburkholderia xenovorans (strain LB400) protein is 23S rRNA (uracil(1939)-C(5))-methyltransferase RlmD.